The following is a 134-amino-acid chain: Small ribosomal subunit protein uS9c (134 aa).

Residues 105–134 (QGYLTRNPLRKERKKYGLKKARKAPQFSKR) form a disordered region. Over residues 115 to 134 (KERKKYGLKKARKAPQFSKR) the composition is skewed to basic residues.

The protein belongs to the universal ribosomal protein uS9 family.

It is found in the plastid. Its subcellular location is the chloroplast. This Nephroselmis olivacea (Green alga) protein is Small ribosomal subunit protein uS9c (rps9).